A 186-amino-acid chain; its full sequence is Large ribosomal subunit protein eL18B (186 aa).

Lys-50 carries the post-translational modification N6,N6,N6-trimethyllysine. Lys-116 is covalently cross-linked (Glycyl lysine isopeptide (Lys-Gly) (interchain with G-Cter in ubiquitin)).

The protein belongs to the eukaryotic ribosomal protein eL18 family. As to quaternary structure, component of the large ribosomal subunit (LSU). Mature yeast ribosomes consist of a small (40S) and a large (60S) subunit. The 40S small subunit contains 1 molecule of ribosomal RNA (18S rRNA) and 33 different proteins (encoded by 57 genes). The large 60S subunit contains 3 rRNA molecules (25S, 5.8S and 5S rRNA) and 46 different proteins (encoded by 81 genes). eL18 interacts with NAP1.

Its subcellular location is the cytoplasm. Functionally, component of the ribosome, a large ribonucleoprotein complex responsible for the synthesis of proteins in the cell. The small ribosomal subunit (SSU) binds messenger RNAs (mRNAs) and translates the encoded message by selecting cognate aminoacyl-transfer RNA (tRNA) molecules. The large subunit (LSU) contains the ribosomal catalytic site termed the peptidyl transferase center (PTC), which catalyzes the formation of peptide bonds, thereby polymerizing the amino acids delivered by tRNAs into a polypeptide chain. The nascent polypeptides leave the ribosome through a tunnel in the LSU and interact with protein factors that function in enzymatic processing, targeting, and the membrane insertion of nascent chains at the exit of the ribosomal tunnel. This Saccharomyces cerevisiae (strain ATCC 204508 / S288c) (Baker's yeast) protein is Large ribosomal subunit protein eL18B.